A 786-amino-acid polypeptide reads, in one-letter code: MPPKPLFPNVFPGDGAPRKRRLALALLAVPGLVPAVSYAQLSGAAAQPQPLDSPWDLRLAPQLEDRPLKDGAKPAAFVIADHTSGTAEQDLAAKGSAELRRGDVVVKADAIHYDQDTDMADAYGQVRINNSGTSFAGPEAHLKIEANQGFMTAPKYHFNMTGGSGSAERVDMVDNERSVFVNGTYTACQCSTNPAWYIKGSRFDFDTGADEGTARNGVLFFQGVPIFASPWMTFPLSGERRSGLLPPTFAMNSSNGFELSLPYYFNIAPNRDLTLTPRIISRRGVMTEATFRYLSPSYSGTFTANYLPDDRLAHRNRYAIYWQHQQNFGGGFGGYVYYNKVSDTTYPEDLGSTNQFVNGTQTLYQQEAGLTYNNGPWSVLARYQHWQTLPPSIAPYSREPQLNVKYTKYNVGGFDFGAEADYSRFRITTADATEGDRIVFNPYIAYGVYGPGYFVVPKVQYHFASYDLNYLSSTTPNSPKRFTESIPTVSFDTGLIFDRSVRLFGQDFIQTLEPRLYYVYTPYRDQSNAPLFDSAESDFGLAEIYQPNTFVGNDRIADANRITAGLTSRFIDPRTGDERARFVIAQQYYFADQRVTLNSGQSAVQARHSDLIVGAALKLGSGFMSETAFQYNQNNNQLVKSSVGFGYSPGERRVINVGYRYTRSNTTLDNQPINQFLISAQWPLTRRLYAIGRFNYDLAGDRVVDGLVGLQYDADCWALGVGVQRAANGINSSGQQNSSTRVMMQLTLKGLSTVDNGLVSAFRAGVPGYTPLPPPPPPMSRFSNYE.

The N-terminal stretch at 1–39 (MPPKPLFPNVFPGDGAPRKRRLALALLAVPGLVPAVSYA) is a signal peptide. The tract at residues 767-786 (PGYTPLPPPPPPMSRFSNYE) is disordered. Residues 770–779 (TPLPPPPPPM) are compositionally biased toward pro residues.

The protein belongs to the LptD family. As to quaternary structure, component of the lipopolysaccharide transport and assembly complex. Interacts with LptE and LptA.

It localises to the cell outer membrane. In terms of biological role, together with LptE, is involved in the assembly of lipopolysaccharide (LPS) at the surface of the outer membrane. This chain is LPS-assembly protein LptD, found in Burkholderia lata (strain ATCC 17760 / DSM 23089 / LMG 22485 / NCIMB 9086 / R18194 / 383).